Reading from the N-terminus, the 314-residue chain is Transcription factor DICHOTOMA (314 aa).

Residues 87–145 enclose the TCP domain; sequence KKDRHSKINRPQGPRDRRVRLSIGIARKFFDLQEMLGFDKPSKTLDWLLTKSKEAIKEL. Residues 201 to 218 enclose the R domain; the sequence is KESRAKARARARERTKEK.

The protein localises to the nucleus. Its function is as follows. Transcription regulator involved in the dorsovental asymmetry of flowers. Promotes dorsal identity. The polypeptide is Transcription factor DICHOTOMA (DICH) (Antirrhinum majus (Garden snapdragon)).